The following is a 279-amino-acid chain: uncharacterized protein (279 aa).

Over residues methionine 1–arginine 29 the composition is skewed to low complexity. 2 disordered regions span residues methionine 1–glutamate 111 and leucine 137–leucine 233. Basic and acidic residues predominate over residues threonine 30–tyrosine 44. The segment covering serine 45–tyrosine 59 has biased composition (low complexity). Over residues glutamate 142–glutamate 153 the composition is skewed to acidic residues. A compositionally biased stretch (low complexity) spans glutamate 170–serine 186. Polar residues predominate over residues alanine 189–valine 205. The span at serine 221–leucine 233 shows a compositional bias: basic and acidic residues.

This is an uncharacterized protein from Caenorhabditis elegans.